The following is a 95-amino-acid chain: MHKQPKLLPPPATPPPPPQSSSWSGNIVFTIKINIWLRVFSHSSPTGLPKPHSPMPSPPEPEHSVGKPANVQIPQVSSPEFCNQKSVLATEHAQT.

2 disordered regions span residues 1-24 and 43-70; these read MHKQPKLLPPPATPPPPPQSSSWS and SSPTGLPKPHSPMPSPPEPEHSVGKPAN. Residues 7-19 show a composition bias toward pro residues; it reads LLPPPATPPPPPQ.

As to expression, expressed in fetal tissues.

The polypeptide is SMAD5 antisense gene protein 1 (SMAD5-AS1) (Homo sapiens (Human)).